The chain runs to 207 residues: Outer-membrane lipoprotein LolB (207 aa).

A signal peptide spans 1 to 21 (MPMRKRHFYRLLPLASLLLAA). A lipid anchor (N-palmitoyl cysteine) is attached at C22. C22 is lipidated: S-diacylglycerol cysteine.

It belongs to the LolB family. In terms of assembly, monomer.

Its subcellular location is the cell outer membrane. Plays a critical role in the incorporation of lipoproteins in the outer membrane after they are released by the LolA protein. The polypeptide is Outer-membrane lipoprotein LolB (Yersinia pseudotuberculosis serotype O:1b (strain IP 31758)).